Here is a 398-residue protein sequence, read N- to C-terminus: Transcription termination factor 1, mitochondrial (398 aa).

A mitochondrion-targeting transit peptide spans 1 to 57 (MQSLSLGQTSISKGLNYLTIMAPGNLWHMRNNFLFGSRCWMTRFSAENIFKSVSFRL). Interaction with DNA stretches follow at residues 169-170 (RS), 246-250 (QSTKR), 323-330 (AEKKFNDK), 354-357 (SIST), and 383-390 (SKKRYEAK).

Belongs to the mTERF family. As to quaternary structure, monomer. Phosphoprotein with mostly four phosphate groups. While the DNA-binding activity is unaffected by the phosphorylation state, only the phosphorylated form of the protein is active for termination activity. Functioning seems to be regulated by phosphorylation.

It is found in the mitochondrion. Its function is as follows. Transcription termination factor. Binds to a 28 bp region within the tRNA(Leu(uur)) gene at a position immediately adjacent to and downstream of the 16S rRNA gene; this region comprises a tridecamer sequence critical for directing accurate termination. Binds DNA along the major grove and promotes DNA bending and partial unwinding. Promotes base flipping. Transcription termination activity appears to be polarized with highest specificity for transcripts initiated on the light strand. The chain is Transcription termination factor 1, mitochondrial (MTERF1) from Pongo abelii (Sumatran orangutan).